Here is a 327-residue protein sequence, read N- to C-terminus: Putative HTH-type transcriptional regulatory protein Mevan_1514 (327 aa).

Positions 128–189 constitute an HTH cro/C1-type domain; that stretch reads LKETREKLNI…IKGINITDYF (62 aa). Residues 139–158 constitute a DNA-binding region (H-T-H motif); it reads VGELAEFSRVSRKTIYKYEQ.

The sequence is that of Putative HTH-type transcriptional regulatory protein Mevan_1514 from Methanococcus vannielii (strain ATCC 35089 / DSM 1224 / JCM 13029 / OCM 148 / SB).